The following is a 645-amino-acid chain: Threonine--tRNA ligase (645 aa).

One can recognise a TGS domain in the interval aspartate 3–threonine 64. The interval aspartate 247–proline 544 is catalytic. Residues cysteine 340, histidine 391, and histidine 521 each contribute to the Zn(2+) site.

Belongs to the class-II aminoacyl-tRNA synthetase family. In terms of assembly, homodimer. Requires Zn(2+) as cofactor.

It localises to the cytoplasm. The enzyme catalyses tRNA(Thr) + L-threonine + ATP = L-threonyl-tRNA(Thr) + AMP + diphosphate + H(+). In terms of biological role, catalyzes the attachment of threonine to tRNA(Thr) in a two-step reaction: L-threonine is first activated by ATP to form Thr-AMP and then transferred to the acceptor end of tRNA(Thr). Also edits incorrectly charged L-seryl-tRNA(Thr). This chain is Threonine--tRNA ligase, found in Halalkalibacterium halodurans (strain ATCC BAA-125 / DSM 18197 / FERM 7344 / JCM 9153 / C-125) (Bacillus halodurans).